Here is an 899-residue protein sequence, read N- to C-terminus: Calcium-transporting ATPase 1 (899 aa).

A run of 4 helical transmembrane segments spans residues 59–79, 80–100, 247–267, and 282–302; these read FVKDPLILLLFASSAISVTLG, NIDDAISIALAIVIVVTVGFV, QLSLISLIGIAVIVLVGFFQG, and VAAIPEGLPIIVTVTLALGVL. Asp329 (4-aspartylphosphate intermediate) is an active-site residue. Transmembrane regions (helical) follow at residues 688-708, 757-777, 827-847, and 854-874; these read FQLSTSVAALSLIAISSVFGF, QLLQRVLLSAFIIVTVTIVVF, FNIAVGGSLIGQALVVYASPF, and EAIGLKDVLILLACTSSVLWV. Ser892 bears the Phosphoserine mark.

It belongs to the cation transport ATPase (P-type) (TC 3.A.3) family.

Its subcellular location is the endoplasmic reticulum membrane. The enzyme catalyses Ca(2+)(in) + ATP + H2O = Ca(2+)(out) + ADP + phosphate + H(+). In terms of biological role, transports calcium and manganese ions into the cell. Regulates cell morphogenesis through control of manganese and calcium homeostasis. This is Calcium-transporting ATPase 1 (pmr1) from Schizosaccharomyces pombe (strain 972 / ATCC 24843) (Fission yeast).